Consider the following 75-residue polypeptide: Alpha-elapitoxin-Bc2b (75 aa).

The N-terminal stretch at 1–2 (YT) is a signal peptide. Cystine bridges form between C5-C24, C17-C45, C30-C34, C49-C60, and C61-C66.

Monomer in solution, homodimer in crystal state. In terms of tissue distribution, expressed by the venom gland.

The protein resides in the secreted. Its function is as follows. Binds to muscular and neuronal nicotinic acetylcholine receptor (nAChR) and inhibits acetylcholine from binding to the receptor, thereby impairing neuromuscular and neuronal transmission. Blocks muscle type nAChR. Also binds with high affinity to alpha-7/CHRNA7 nAChRs. In addition, shows a weak inhibition of neuronal alpha-3-beta-2/CHRNA3-CHRNB2 nAChR. Selectively binds to alpha-1-delta subunit interface of the mouse muscle nicotinic acetylcholine receptor, with a 10-fold higher affinity for the adult than for the fetal receptors. In vivo, when intraperitoneally injected into mice, causes flaccid paralysis and respiratory distress, followed by death within 2-4 hours. This Bungarus candidus (Malayan krait) protein is Alpha-elapitoxin-Bc2b.